We begin with the raw amino-acid sequence, 172 residues long: MQEALLKCVHEVLSATAGTKAEGVYFIGMTVKGSVVHRKIDVVVDADSGVRIDQCAFLSRRLRERLEEDEEMIGILGDNFDLVVGSPGLGEPIILDRQYGRHVGRLLRVSYSDLEGVEHELTGHLLEVSLAEGAGSIMLKPRVEKKKGKGEELENITLELGAVLRAVPEAEI.

The protein belongs to the RimP family.

The protein localises to the cytoplasm. In terms of biological role, required for maturation of 30S ribosomal subunits. This is Ribosome maturation factor RimP from Chlorobium phaeovibrioides (strain DSM 265 / 1930) (Prosthecochloris vibrioformis (strain DSM 265)).